The sequence spans 266 residues: Glucosamine-6-phosphate deaminase (266 aa).

Residue aspartate 72 is the Proton acceptor; for enolization step of the active site. Residue aspartate 141 is the For ring-opening step of the active site. Histidine 143 acts as the Proton acceptor; for ring-opening step in catalysis. The For ring-opening step role is filled by glutamate 148.

Belongs to the glucosamine/galactosamine-6-phosphate isomerase family. NagB subfamily. Homohexamer.

It carries out the reaction alpha-D-glucosamine 6-phosphate + H2O = beta-D-fructose 6-phosphate + NH4(+). The protein operates within amino-sugar metabolism; N-acetylneuraminate degradation; D-fructose 6-phosphate from N-acetylneuraminate: step 5/5. Allosterically activated by N-acetylglucosamine 6-phosphate (GlcNAc6P). In terms of biological role, catalyzes the reversible isomerization-deamination of glucosamine 6-phosphate (GlcN6P) to form fructose 6-phosphate (Fru6P) and ammonium ion. In Salmonella typhimurium (strain LT2 / SGSC1412 / ATCC 700720), this protein is Glucosamine-6-phosphate deaminase.